We begin with the raw amino-acid sequence, 577 residues long: Signal peptide peptidase-like 2B (577 aa).

A signal peptide spans 1-19 (MAAARLAASLLLLAAQVAC). Residues 20–168 (EFGVLRVVPQ…APSEPVMDYN (149 aa)) lie on the Lumenal side of the membrane. One can recognise a PA domain in the interval 49 to 149 (LPHDLNKVSL…RDLQDIFRRF (101 aa)). Asn91 is a glycosylation site (N-linked (GlcNAc...) asparagine). Residues 169–189 (MVIIFIMAVGTVALGGYWAGS) traverse the membrane as a helical segment. Residues 190–216 (HDVKKYMKHKRDDVPEKQEDEAVDVTP) are Cytoplasmic-facing. The helical transmembrane segment at 217–237 (VMICVFVVMCCFMLVLLYYFY) threads the bilayer. Residues 238 to 239 (DR) are Lumenal-facing. A helical membrane pass occupies residues 240 to 260 (LVYVIIGIFCLASSTGLYSCL). Residues 261-286 (APCVRKLPFCTCRVPDNNLPYFHKRP) are Cytoplasmic-facing. Residues 287–307 (QARMLLLALFCVTVSVVWGVF) traverse the membrane as a helical segment. At 308 to 312 (RNEDQ) the chain is on the lumenal side. The helical transmembrane segment at 313 to 333 (WAWVLQDTLGIAFCLYMLRTI) threads the bilayer. At 334 to 341 (RLPTFKAC) the chain is on the cytoplasmic side. Residues 342–362 (TLLLLVLFVYDIFFVFITPYL) form a helical membrane-spanning segment. Asp352 is an active-site residue. Topologically, residues 363–405 (TKSGNSIMVEVATGPSNSSTHEKLPMVLKVPRLNTSPLSLCDR) are lumenal. A helical membrane pass occupies residues 406-426 (PFSLLGFGDILVPGLLVAYCH). Asp414 is an active-site residue. The Cytoplasmic portion of the chain corresponds to 427 to 438 (RFDIQVQSSRIY). Residues 439-459 (FVACTIAYGLGLLVTFVALVL) traverse the membrane as a helical segment. Over 460–463 (MRHG) the chain is Lumenal. A helical transmembrane segment spans residues 464–484 (QPALLYLVPCTLLTSCTVALW). The PAL motif lies at 465–467 (PAL). The Cytoplasmic portion of the chain corresponds to 485–577 (RREMGAFWTG…IPVVTPGTSA (93 aa)). A disordered region spans residues 502 to 577 (QTPWAAPQGP…IPVVTPGTSA (76 aa)).

It belongs to the peptidase A22B family. As to quaternary structure, monomer. Homodimer. Interacts with ITM2B and TNF. Glycosylated.

It is found in the cell membrane. It localises to the golgi apparatus membrane. The protein localises to the lysosome membrane. The protein resides in the endosome membrane. Its subcellular location is the membrane. Its function is as follows. Intramembrane-cleaving aspartic protease (I-CLiP) that cleaves type II membrane signal peptides in the hydrophobic plane of the membrane. Functions in ITM2B and TNF processing. Catalyzes the intramembrane cleavage of the anchored fragment of shed TNF-alpha (TNF), which promotes the release of the intracellular domain (ICD) for signaling to the nucleus. May play a role in the regulation of innate and adaptive immunity. This chain is Signal peptide peptidase-like 2B, found in Rattus norvegicus (Rat).